The following is a 170-amino-acid chain: TFIIB-type zinc finger protein (170 aa).

Residues 1–30 (MECPVCGSNEIVWDNKNGEVVCSNCGIIID) form a TFIIB-type zinc finger. 4 residues coordinate Zn(2+): Cys-3, Cys-6, Cys-22, and Cys-25.

This sequence belongs to the TFIIB family. Zn(2+) is required as a cofactor.

In Saccharolobus shibatae (strain ATCC 51178 / DSM 5389 / JCM 8931 / NBRC 15437 / B12) (Sulfolobus shibatae), this protein is TFIIB-type zinc finger protein.